A 31-amino-acid polypeptide reads, in one-letter code: Unknown protein from spot 104 of 2D-PAGE of thylakoid (31 aa).

It is found in the plastid. It localises to the chloroplast thylakoid. The protein is Unknown protein from spot 104 of 2D-PAGE of thylakoid of Pisum sativum (Garden pea).